Here is a 306-residue protein sequence, read N- to C-terminus: Large ribosomal subunit protein mL45 (306 aa).

It belongs to the mitochondrion-specific ribosomal protein mL45 family. Component of the mitochondrial ribosome large subunit (39S) which comprises a 16S rRNA and about 50 distinct proteins.

It localises to the mitochondrion. In terms of biological role, component of the mitochondrial large ribosomal subunit (mt-LSU). Within the mitochondrial ribosomes, required to direct the nascent polypeptide toward the tunnel exit and position the exit at a distance from the membrane surface. The chain is Large ribosomal subunit protein mL45 (MRPL45) from Bos taurus (Bovine).